Reading from the N-terminus, the 277-residue chain is Cation-dependent mannose-6-phosphate receptor (277 aa).

An N-terminal signal peptide occupies residues 1–26 (MFPFYSCWRTGLLLLLLAVAVRESWQ). Residues 27–185 (TEEKTCDLVG…SLACSPEISH (159 aa)) lie on the Lumenal side of the membrane. The MRH domain maps to 30–181 (KTCDLVGEKG…EMDSSLACSP (152 aa)). C32 and C78 form a disulfide bridge. Residues N57, N83, N94, N107, and N113 are each glycosylated (N-linked (GlcNAc...) asparagine). Intrachain disulfides connect C132/C167 and C145/C179. Residues 186–210 (LSVGSILLVTFASLVAVYVVGGFLY) traverse the membrane as a helical segment. The Cytoplasmic portion of the chain corresponds to 211-277 (QRLVVGAKGM…EERDDHLLPM (67 aa)). Residues 256–277 (RGVGDDQLGEESEERDDHLLPM) are disordered. S267 is subject to Phosphoserine.

As to quaternary structure, homodimer. Binds GGA1, GGA2 and GGA3.

The protein localises to the lysosome membrane. Functionally, transport of phosphorylated lysosomal enzymes from the Golgi complex and the cell surface to lysosomes. Lysosomal enzymes bearing phosphomannosyl residues bind specifically to mannose-6-phosphate receptors in the Golgi apparatus and the resulting receptor-ligand complex is transported to an acidic prelyosomal compartment where the low pH mediates the dissociation of the complex. The protein is Cation-dependent mannose-6-phosphate receptor (M6PR) of Homo sapiens (Human).